A 351-amino-acid chain; its full sequence is Holliday junction branch migration complex subunit RuvB (351 aa).

Residues 1 to 22 (MSDPKANRMVSPERRSDDVGDT) are disordered. Residues 2-185 (SDPKANRMVS…FGIPVRLNFY (184 aa)) form a large ATPase domain (RuvB-L) region. Residues L24, R25, G66, K69, T70, T71, 132–134 (EDF), R175, Y185, and R222 each bind ATP. Mg(2+) is bound at residue T70. A small ATPAse domain (RuvB-S) region spans residues 186 to 256 (TIEELESIVS…IADHALSALE (71 aa)). The tract at residues 259 to 351 (AAGLDAMDRR…GLFGTDESDD (93 aa)) is head domain (RuvB-H). The DNA site is built by R295, R314, and R319.

Belongs to the RuvB family. As to quaternary structure, homohexamer. Forms an RuvA(8)-RuvB(12)-Holliday junction (HJ) complex. HJ DNA is sandwiched between 2 RuvA tetramers; dsDNA enters through RuvA and exits via RuvB. An RuvB hexamer assembles on each DNA strand where it exits the tetramer. Each RuvB hexamer is contacted by two RuvA subunits (via domain III) on 2 adjacent RuvB subunits; this complex drives branch migration. In the full resolvosome a probable DNA-RuvA(4)-RuvB(12)-RuvC(2) complex forms which resolves the HJ.

The protein resides in the cytoplasm. The enzyme catalyses ATP + H2O = ADP + phosphate + H(+). The RuvA-RuvB-RuvC complex processes Holliday junction (HJ) DNA during genetic recombination and DNA repair, while the RuvA-RuvB complex plays an important role in the rescue of blocked DNA replication forks via replication fork reversal (RFR). RuvA specifically binds to HJ cruciform DNA, conferring on it an open structure. The RuvB hexamer acts as an ATP-dependent pump, pulling dsDNA into and through the RuvAB complex. RuvB forms 2 homohexamers on either side of HJ DNA bound by 1 or 2 RuvA tetramers; 4 subunits per hexamer contact DNA at a time. Coordinated motions by a converter formed by DNA-disengaged RuvB subunits stimulates ATP hydrolysis and nucleotide exchange. Immobilization of the converter enables RuvB to convert the ATP-contained energy into a lever motion, pulling 2 nucleotides of DNA out of the RuvA tetramer per ATP hydrolyzed, thus driving DNA branch migration. The RuvB motors rotate together with the DNA substrate, which together with the progressing nucleotide cycle form the mechanistic basis for DNA recombination by continuous HJ branch migration. Branch migration allows RuvC to scan DNA until it finds its consensus sequence, where it cleaves and resolves cruciform DNA. The protein is Holliday junction branch migration complex subunit RuvB of Bradyrhizobium diazoefficiens (strain JCM 10833 / BCRC 13528 / IAM 13628 / NBRC 14792 / USDA 110).